The sequence spans 323 residues: Arginase, hepatic (323 aa).

Mn(2+) contacts are provided by H102, D125, H127, and D129. Substrate contacts are provided by residues 127 to 131, 138 to 140, and D184; these read HADIN and SGN. Residues D233 and D235 each coordinate Mn(2+). Substrate contacts are provided by T247 and E278.

It belongs to the arginase family. Homotrimer. The cofactor is Mn(2+).

It carries out the reaction L-arginine + H2O = urea + L-ornithine. Its pathway is nitrogen metabolism; urea cycle; L-ornithine and urea from L-arginine: step 1/1. The polypeptide is Arginase, hepatic (Aquarana catesbeiana (American bullfrog)).